The sequence spans 82 residues: Sec-independent protein translocase protein TatA (82 aa).

The helical transmembrane segment at 1-21 (MGGISIWQLLIIAVIIVLLFG) threads the bilayer. The tract at residues 48 to 82 (PAKEAKKDADFVPQNLEKKEAETVEKQKQNDKEQA) is disordered.

It belongs to the TatA/E family. The Tat system comprises two distinct complexes: a TatABC complex, containing multiple copies of TatA, TatB and TatC subunits, and a separate TatA complex, containing only TatA subunits. Substrates initially bind to the TatABC complex, which probably triggers association of the separate TatA complex to form the active translocon.

The protein resides in the cell inner membrane. Its function is as follows. Part of the twin-arginine translocation (Tat) system that transports large folded proteins containing a characteristic twin-arginine motif in their signal peptide across membranes. TatA could form the protein-conducting channel of the Tat system. The sequence is that of Sec-independent protein translocase protein TatA from Aliivibrio fischeri (strain ATCC 700601 / ES114) (Vibrio fischeri).